The sequence spans 492 residues: Spore germination protein GerLA (492 aa).

3 helical membrane passes run 295 to 315 (IIAV…QGLI), 384 to 404 (FLVI…VYSI), and 410 to 430 (ILLF…IILA).

It belongs to the GerABKA family.

The protein localises to the membrane. Functionally, contributes to the L-alanine germination response. This chain is Spore germination protein GerLA (gerLA), found in Bacillus cereus.